The primary structure comprises 213 residues: Small ribosomal subunit protein uS3 (213 aa).

The KH type-2 domain maps to 38–106 (IRSYIKKLLY…EFSLEVTEVR (69 aa)).

The protein belongs to the universal ribosomal protein uS3 family. Part of the 30S ribosomal subunit. Forms a tight complex with proteins S10 and S14.

In terms of biological role, binds the lower part of the 30S subunit head. Binds mRNA in the 70S ribosome, positioning it for translation. The protein is Small ribosomal subunit protein uS3 of Lawsonia intracellularis (strain PHE/MN1-00).